A 359-amino-acid polypeptide reads, in one-letter code: Phosphate acyltransferase (359 aa).

Positions Ala338 to Ala359 are disordered.

This sequence belongs to the PlsX family. As to quaternary structure, homodimer. Probably interacts with PlsY.

It localises to the cytoplasm. The catalysed reaction is a fatty acyl-[ACP] + phosphate = an acyl phosphate + holo-[ACP]. It participates in lipid metabolism; phospholipid metabolism. Catalyzes the reversible formation of acyl-phosphate (acyl-PO(4)) from acyl-[acyl-carrier-protein] (acyl-ACP). This enzyme utilizes acyl-ACP as fatty acyl donor, but not acyl-CoA. This chain is Phosphate acyltransferase, found in Cupriavidus taiwanensis (strain DSM 17343 / BCRC 17206 / CCUG 44338 / CIP 107171 / LMG 19424 / R1) (Ralstonia taiwanensis (strain LMG 19424)).